The sequence spans 117 residues: Large ribosomal subunit protein bL20 (117 aa).

Belongs to the bacterial ribosomal protein bL20 family.

In terms of biological role, binds directly to 23S ribosomal RNA and is necessary for the in vitro assembly process of the 50S ribosomal subunit. It is not involved in the protein synthesizing functions of that subunit. This Aliivibrio salmonicida (strain LFI1238) (Vibrio salmonicida (strain LFI1238)) protein is Large ribosomal subunit protein bL20.